A 37-amino-acid polypeptide reads, in one-letter code: Large ribosomal subunit protein bL36c (37 aa).

Belongs to the bacterial ribosomal protein bL36 family.

The protein localises to the plastid. This Epifagus virginiana (Beechdrops) protein is Large ribosomal subunit protein bL36c (rpl36).